A 78-amino-acid polypeptide reads, in one-letter code: Large ribosomal subunit protein bL28 (78 aa).

The disordered stretch occupies residues Met-1–Met-22.

Belongs to the bacterial ribosomal protein bL28 family.

The chain is Large ribosomal subunit protein bL28 from Yersinia pseudotuberculosis serotype O:1b (strain IP 31758).